The sequence spans 564 residues: 2-succinyl-5-enolpyruvyl-6-hydroxy-3-cyclohexene-1-carboxylate synthase (564 aa).

It belongs to the TPP enzyme family. MenD subfamily. In terms of assembly, homodimer. Mg(2+) is required as a cofactor. Mn(2+) serves as cofactor. The cofactor is thiamine diphosphate.

It catalyses the reaction isochorismate + 2-oxoglutarate + H(+) = 5-enolpyruvoyl-6-hydroxy-2-succinyl-cyclohex-3-ene-1-carboxylate + CO2. Its pathway is quinol/quinone metabolism; 1,4-dihydroxy-2-naphthoate biosynthesis; 1,4-dihydroxy-2-naphthoate from chorismate: step 2/7. The protein operates within quinol/quinone metabolism; menaquinone biosynthesis. Functionally, catalyzes the thiamine diphosphate-dependent decarboxylation of 2-oxoglutarate and the subsequent addition of the resulting succinic semialdehyde-thiamine pyrophosphate anion to isochorismate to yield 2-succinyl-5-enolpyruvyl-6-hydroxy-3-cyclohexene-1-carboxylate (SEPHCHC). This is 2-succinyl-5-enolpyruvyl-6-hydroxy-3-cyclohexene-1-carboxylate synthase from Photorhabdus laumondii subsp. laumondii (strain DSM 15139 / CIP 105565 / TT01) (Photorhabdus luminescens subsp. laumondii).